We begin with the raw amino-acid sequence, 229 residues long: Protein FAM3C (229 aa).

The signal sequence occupies residues 1–24 (MRIAGAIKFVIAVALFLLTFYVIS). 2 cysteine pairs are disulfide-bonded: cysteine 59–cysteine 87 and cysteine 65–cysteine 222. Residues 68-226 (KHFAFKIASG…VEMEGCIPQK (159 aa)) enclose the GG-type lectin domain.

Belongs to the FAM3 family.

The protein localises to the secreted. Its function is as follows. Involved in retinal laminar formation. The polypeptide is Protein FAM3C (fam3c) (Xenopus tropicalis (Western clawed frog)).